We begin with the raw amino-acid sequence, 377 residues long: tRNA(Met) cytidine acetate ligase (377 aa).

ATP-binding positions include 7–20 (ITEY…HLFH), Gly-100, Asn-153, and Arg-178.

Belongs to the TmcAL family.

Its subcellular location is the cytoplasm. The catalysed reaction is cytidine(34) in elongator tRNA(Met) + acetate + ATP = N(4)-acetylcytidine(34) in elongator tRNA(Met) + AMP + diphosphate. Its function is as follows. Catalyzes the formation of N(4)-acetylcytidine (ac(4)C) at the wobble position of elongator tRNA(Met), using acetate and ATP as substrates. First activates an acetate ion to form acetyladenylate (Ac-AMP) and then transfers the acetyl group to tRNA to form ac(4)C34. The protein is tRNA(Met) cytidine acetate ligase of Staphylococcus epidermidis (strain ATCC 12228 / FDA PCI 1200).